Here is a 384-residue protein sequence, read N- to C-terminus: Probable E3 ubiquitin-protein ligase rnf113 (384 aa).

A compositionally biased stretch (basic residues) spans 1–11 (MDLFRKPKKRN). Residues 1-96 (MDLFRKPKKR…GPSGPRDQGA (96 aa)) form a disordered region. Residues 42–52 (PMVQSTKQLDA) are compositionally biased toward polar residues. The segment covering 60 to 71 (SSDDSDDSDDNQ) has biased composition (acidic residues). The C3H1-type zinc finger occupies 175–203 (DFAPDICKDYKETGFCTFGDSCKFVHDRS). The RING-type zinc-finger motif lies at 241-279 (CFICGNPFVDPIVTKCKHYFCTGCALKSFQKSSKCPICQ). A disordered region spans residues 299–384 (KKQQQKQEAE…ESDDDDAEKD (86 aa)). Basic and acidic residues-rich tracts occupy residues 303–312 (QKQEAEKQEE) and 320–334 (EKPHECDDHHHHDHE). The segment covering 351–384 (EKSDEEQEIMMEDVEGLEGGENDSESDDDDAEKD) has biased composition (acidic residues).

It catalyses the reaction S-ubiquitinyl-[E2 ubiquitin-conjugating enzyme]-L-cysteine + [acceptor protein]-L-lysine = [E2 ubiquitin-conjugating enzyme]-L-cysteine + N(6)-ubiquitinyl-[acceptor protein]-L-lysine.. It participates in protein modification; protein ubiquitination. Functionally, may function as E3 ubiquitin-protein ligase that catalyzes the transfer of ubiquitin onto target proteins. May play a role in DNA repair via its role in the synthesis of 'Lys-63'-linked polyubiquitin chains that recruit proteins involved in repair to sites of DNA damage by alkylating agents. This chain is Probable E3 ubiquitin-protein ligase rnf113 (rnf-113), found in Caenorhabditis elegans.